We begin with the raw amino-acid sequence, 181 residues long: MILSDWDIRVYIEKKLLIIDPLFDDTVRENGVDLRFGDEFCRFKRENSVVDTSRDGVDNVLECYRVRGDGFVINPLEHVLTTTLEYVEFPHDLVGLVNLRSTFARFGLYIPPTVIDAGFKGNITIELVGSTVPVKVYPGQRFLHLILARTSSPVYKPYTGKYQGQRGVTPPKLDNSSSKNF.

Residues 100-105 (RSTFAR) and Asp116 contribute to the dCTP site. The active-site Proton donor/acceptor is the Glu126. DCTP-binding residues include Tyr158 and Gln165. The segment at 160–181 (GKYQGQRGVTPPKLDNSSSKNF) is disordered.

It belongs to the dCTP deaminase family. In terms of assembly, homotrimer.

It carries out the reaction dCTP + H2O + H(+) = dUTP + NH4(+). It functions in the pathway pyrimidine metabolism; dUMP biosynthesis; dUMP from dCTP (dUTP route): step 1/2. In terms of biological role, catalyzes the deamination of dCTP to dUTP. This Desulfurococcus amylolyticus (strain DSM 18924 / JCM 16383 / VKM B-2413 / 1221n) (Desulfurococcus kamchatkensis) protein is dCTP deaminase.